The chain runs to 644 residues: Threonine--tRNA ligase (644 aa).

In terms of domain architecture, TGS spans 1–61 (MVAITLPDGS…VADAKVEIVT (61 aa)). Residues 242–533 (DHRKIGKALN…LIENYAGWMP (292 aa)) are catalytic. Residues Cys-333, His-384, and His-510 each coordinate Zn(2+).

This sequence belongs to the class-II aminoacyl-tRNA synthetase family. In terms of assembly, homodimer. Zn(2+) serves as cofactor.

It is found in the cytoplasm. The catalysed reaction is tRNA(Thr) + L-threonine + ATP = L-threonyl-tRNA(Thr) + AMP + diphosphate + H(+). Its function is as follows. Catalyzes the attachment of threonine to tRNA(Thr) in a two-step reaction: L-threonine is first activated by ATP to form Thr-AMP and then transferred to the acceptor end of tRNA(Thr). Also edits incorrectly charged L-seryl-tRNA(Thr). The chain is Threonine--tRNA ligase from Psychrobacter arcticus (strain DSM 17307 / VKM B-2377 / 273-4).